We begin with the raw amino-acid sequence, 333 residues long: Cysteine protease (333 aa).

Positions 1-18 (MKFLLVAALCALVAIGSC) are cleaved as a signal peptide. Residues 19–108 (KPTREEIKTF…MEAAKEPLIN (90 aa)) constitute a propeptide, activation peptide. A glycan (N-linked (GlcNAc...) asparagine) is linked at Asn-93. 2 disulfide bridges follow: Cys-134–Cys-182 and Cys-168–Cys-214. Cys-137 is an active-site residue. Active-site residues include His-281 and Asn-301.

It belongs to the peptidase C1 family. Homodimer.

Its function is as follows. Cysteine protease. The sequence is that of Cysteine protease from Blomia tropicalis (Mite).